Here is a 764-residue protein sequence, read N- to C-terminus: Thyrotropin receptor (764 aa).

The signal sequence occupies residues 1–20 (MRPPPLLHLALLLALPRSLG). Residues 21–413 (GKGCPSPPCE…EFNPCEDIMG (393 aa)) lie on the Extracellular side of the membrane. The cysteines at positions 31 and 41 are disulfide-linked. Asparagine 77 and asparagine 99 each carry an N-linked (GlcNAc...) asparagine glycan. LRR repeat units follow at residues 125–149 (LPLLKFLGIFNTGLGVFPDVTKVYS), 150–174 (TDVFFILEITDNPYMASIPANAFQG), 176–199 (CNETLTLKLYNNGFTSIQGHAFNG), 201–223 (KLDAVYLNKNKYLSAIDKDAFGG), 225–248 (YSGPTLLDVSYTSVTALPSKGLEH), and 250–271 (KELIARNTWTLKKLPLSLSFLH). Asparagine 177 and asparagine 198 each carry an N-linked (GlcNAc...) asparagine glycan. Asparagine 302 is a glycosylation site (N-linked (GlcNAc...) asparagine). Tyrosine 385 carries the sulfotyrosine modification. The chain crosses the membrane as a helical span at residues 414 to 441 (YKFLRIVVWFVSLLALLGNVFVLIVLLT). Topologically, residues 442 to 450 (SHYKLTVPR) are cytoplasmic. Residues 451-473 (FLMCNLAFADFCMGMYLLLIASV) form a helical membrane-spanning segment. The Extracellular portion of the chain corresponds to 474 to 494 (DLYTHSEYYNHAIDWQTGPGC). A disulfide bond links cysteine 494 and cysteine 569. A helical transmembrane segment spans residues 495 to 517 (NTAGFFTVFASELSVYTLTVITL). Residues 518–537 (ERWYAITFAMRLDRKIRLRH) are Cytoplasmic-facing. A helical transmembrane segment spans residues 538–560 (AYAIMVGGWVCCFLLALLPLVGI). At 561 to 580 (SSYAKVSICLPMDTETPLAL) the chain is on the extracellular side. A helical membrane pass occupies residues 581–602 (AYIILVLLLNIVAFIIVCSCYV). Topologically, residues 603-625 (KIYITVRNPQYNPGDKDTKIAKR) are cytoplasmic. Residues 626 to 649 (MAVLIFTDFMCMAPISFYALSALM) traverse the membrane as a helical segment. The Extracellular segment spans residues 650–660 (NKPLITVTNSK). The chain crosses the membrane as a helical span at residues 661–682 (ILLVLFYPLNSCANPFLYAIFT). At 683 to 764 (KAFQRDVFIL…ISKEYNQTVL (82 aa)) the chain is on the cytoplasmic side. The PDZ-binding signature appears at 762-764 (TVL).

It belongs to the G-protein coupled receptor 1 family. FSH/LSH/TSH subfamily. As to quaternary structure, interacts with heterodimer GPHA2:GPHB5; this interaction stimulates cAMP production. Interacts (via the PDZ-binding motif) with SCRIB; regulates TSHR trafficking and function. Post-translationally, glycosylated. In terms of processing, sulfated. Sulfation on Tyr-385 plays a role in thyrotropin receptor binding and activation.

The protein localises to the cell membrane. It is found in the basolateral cell membrane. Functionally, receptor for the thyroid-stimulating hormone (TSH) or thyrotropin. Also acts as a receptor for the heterodimeric glycoprotein hormone (GPHA2:GPHB5) or thyrostimulin. The activity of this receptor is mediated by G proteins which activate adenylate cyclase. Plays a central role in controlling thyroid cell metabolism. This is Thyrotropin receptor (TSHR) from Canis lupus familiaris (Dog).